The primary structure comprises 345 residues: Phosphate acyltransferase (345 aa).

It belongs to the PlsX family. Homodimer. Probably interacts with PlsY.

It is found in the cytoplasm. It catalyses the reaction a fatty acyl-[ACP] + phosphate = an acyl phosphate + holo-[ACP]. The protein operates within lipid metabolism; phospholipid metabolism. Its function is as follows. Catalyzes the reversible formation of acyl-phosphate (acyl-PO(4)) from acyl-[acyl-carrier-protein] (acyl-ACP). This enzyme utilizes acyl-ACP as fatty acyl donor, but not acyl-CoA. This Wolbachia pipientis wMel protein is Phosphate acyltransferase.